The sequence spans 676 residues: Electrogenic aspartate/glutamate antiporter SLC25A13, mitochondrial (676 aa).

Position 2 is an N-acetylalanine (Ala-2). The interval 2 to 295 (AAAKVALTKR…TLADIERIAP (294 aa)) is regulatory N-terminal domain. Residues 2–332 (AAAKVALTKR…LLQLAESAYR (331 aa)) are Mitochondrial intermembrane-facing. N6-acetyllysine is present on Lys-18. EF-hand domains are found at residues 51–86 (SQPN…SVLC), 87–122 (APDA…TTIH), 123–157 (QHIP…FLLE), and 158–193 (IQLE…IRPH). Positions 66, 68, 70, 72, and 77 each coordinate Ca(2+). The segment at 296-311 (LEEGMLPFNLAEAQRQ) is linker loop domain. The segment at 322–613 (FLLQLAESAY…LQRWFYVDFG (292 aa)) is carrier domain. Solcar repeat units lie at residues 327–419 (AESA…VRDK), 427–511 (VPLL…VKAS), and 519–607 (VSPG…LQRW). The helical transmembrane segment at 333–350 (FGLGSIAGAVGATAVYPI) threads the bilayer. Residues 351–393 (DLVKTRMQNQRSTGSFVGELMYKNSFDCFKKVLRYEGFFGLYR) lie on the Mitochondrial matrix side of the membrane. N6-acetyllysine is present on residues Lys-354 and Lys-373. A helical transmembrane segment spans residues 394-413 (GLLPQLLGVAPEKAIKLTVN). Over 414-436 (DFVRDKFMHKDGSVPLLAEIFAG) the chain is Mitochondrial intermembrane. The chain crosses the membrane as a helical span at residues 437–450 (GCAGGSQVIFTNPL). The Mitochondrial matrix portion of the chain corresponds to 451–485 (EIVKIRLQVAGEITTGPRVSALSVVRDLGFFGIYK). Lys-454 carries the N6-methyllysine modification. The residue at position 485 (Lys-485) is an N6-acetyllysine; alternate. Lys-485 carries the post-translational modification N6-succinyllysine; alternate. A helical membrane pass occupies residues 486–505 (GAKACFLRDIPFSAIYFPCY). At 506–524 (AHVKASFANEDGQVSPGSL) the chain is on the mitochondrial intermembrane side. Residues 525–542 (LLAGAIAGMPAASLVTPA) form a helical membrane-spanning segment. Residues 543 to 581 (DVIKTRLQVAARAGQTTYNGVTDCFRKILREEGPKALWK) lie on the Mitochondrial matrix side of the membrane. N6-succinyllysine is present on Lys-581. A helical membrane pass occupies residues 582 to 601 (GVAARVFRSSPQFGVTLLTY). Over 602-676 (ELLQRWFYVD…STSKVTAGDS (75 aa)) the chain is Mitochondrial intermembrane. A C-terminal domain region spans residues 614–676 (GVKPVGSEPV…STSKVTAGDS (63 aa)). Position 663 is an N6-acetyllysine (Lys-663). Ser-667 carries the post-translational modification Phosphoserine.

The protein belongs to the mitochondrial carrier (TC 2.A.29) family. Homodimer (via N-terminus). As to expression, at 10.5 dpc, expressed in branchial arches, a well as in the limb and tail buds. At 13.5 dpc expression is predominant in epithelial structures and the forebrain, kidney and liver. Expression in liver is maintained into adulthood.

Its subcellular location is the mitochondrion inner membrane. It catalyses the reaction L-aspartate(in) + L-glutamate(out) + H(+)(out) = L-aspartate(out) + L-glutamate(in) + H(+)(in). The catalysed reaction is 3-sulfino-L-alanine(out) + L-glutamate(in) + H(+)(in) = 3-sulfino-L-alanine(in) + L-glutamate(out) + H(+)(out). It carries out the reaction 3-sulfino-L-alanine(out) + L-aspartate(in) = 3-sulfino-L-alanine(in) + L-aspartate(out). Its function is as follows. Mitochondrial electrogenic aspartate/glutamate antiporter that favors efflux of aspartate and entry of glutamate and proton within the mitochondria as part of the malate-aspartate shuttle. Also mediates the uptake of L-cysteinesulfinate (3-sulfino-L-alanine) by mitochondria in exchange of L-glutamate and proton. Can also exchange L-cysteinesulfinate with aspartate in their anionic form without any proton translocation. Lacks transport activity towards gamma-aminobutyric acid (GABA). The protein is Electrogenic aspartate/glutamate antiporter SLC25A13, mitochondrial of Mus musculus (Mouse).